Consider the following 224-residue polypeptide: Ribose-5-phosphate isomerase A (224 aa).

Substrate-binding positions include threonine 34–threonine 37, aspartate 87–aspartate 90, and lysine 100–glycine 103. The active-site Proton acceptor is glutamate 109. Position 127 (lysine 127) interacts with substrate.

This sequence belongs to the ribose 5-phosphate isomerase family. Homodimer.

It catalyses the reaction aldehydo-D-ribose 5-phosphate = D-ribulose 5-phosphate. It functions in the pathway carbohydrate degradation; pentose phosphate pathway; D-ribose 5-phosphate from D-ribulose 5-phosphate (non-oxidative stage): step 1/1. Catalyzes the reversible conversion of ribose-5-phosphate to ribulose 5-phosphate. The chain is Ribose-5-phosphate isomerase A from Francisella tularensis subsp. tularensis (strain FSC 198).